A 215-amino-acid polypeptide reads, in one-letter code: uncharacterized protein (215 aa).

Residues Gly53, Glu74, and Asp97 each contribute to the S-adenosyl-L-methionine site.

The protein belongs to the methyltransferase superfamily. YrrT family.

Functionally, could be a S-adenosyl-L-methionine-dependent methyltransferase. This is an uncharacterized protein from Geobacillus thermodenitrificans (strain NG80-2).